We begin with the raw amino-acid sequence, 27 residues long: Small integral membrane protein 43 (27 aa).

Positions 15 to 21 (HREPWGF) are important for interaction with SLC2A1 and SLC2A3.

In terms of assembly, interacts with glucose transporters SLC2A1/GLUT1 and SLC2A3/GLUT3; the interactions may promote SLC2A1- and SLC2A3-mediated glucose transport to meet the energy needs of mesendoderm differentiation.

Its subcellular location is the cell membrane. In terms of biological role, required for mesendoderm differentiation. Interacts with glucose transporters and promotes glucose uptake. Probably augments the glucose uptake capacity of glucose transporter proteins to meet the energy needs of mesendoderm differentiation. The polypeptide is Small integral membrane protein 43 (Pongo abelii (Sumatran orangutan)).